The primary structure comprises 504 residues: Cobyric acid synthase (504 aa).

Residues 258–454 form the GATase cobBQ-type domain; the sequence is EIEIAIIKLP…LHGIFENDEW (197 aa). Cysteine 339 (nucleophile) is an active-site residue. Histidine 446 is an active-site residue.

Belongs to the CobB/CobQ family. CobQ subfamily.

It participates in cofactor biosynthesis; adenosylcobalamin biosynthesis. Catalyzes amidations at positions B, D, E, and G on adenosylcobyrinic A,C-diamide. NH(2) groups are provided by glutamine, and one molecule of ATP is hydrogenolyzed for each amidation. In Prochlorococcus marinus (strain NATL2A), this protein is Cobyric acid synthase.